Reading from the N-terminus, the 1204-residue chain is Major DNA-binding protein (1204 aa).

The interval 289–314 is disordered; sequence SGTTTARGARRNDVNSTSKPSPSGGF. A zinc finger lies at 497–510; sequence CSLCEKHTRPVCAH. 2 short sequence motifs (required for filament formation) span residues 841-842 and 1146-1148; these read FW and FNF. A required for nuclear localization region spans residues 1177–1204; the sequence is LKRPPEDDELFDLSGIPIKHGNITMEMI.

It belongs to the herpesviridae major DNA-binding protein family. As to quaternary structure, homooligomers. Forms double-helical filaments necessary for the formation of replication compartments within the host nucleus. Interacts with the origin-binding protein. Interacts with the helicase primase complex; this interaction stimulates primer synthesis activity of the helicase-primase complex. Interacts with the DNA polymerase. Interacts with the alkaline exonuclease; this interaction increases its nuclease processivity.

The protein resides in the host nucleus. Functionally, plays several crucial roles in viral infection. Participates in the opening of the viral DNA origin to initiate replication by interacting with the origin-binding protein. May disrupt loops, hairpins and other secondary structures present on ssDNA to reduce and eliminate pausing of viral DNA polymerase at specific sites during elongation. Promotes viral DNA recombination by performing strand-transfer, characterized by the ability to transfer a DNA strand from a linear duplex to a complementary single-stranded DNA circle. Can also catalyze the renaturation of complementary single strands. Additionally, reorganizes the host cell nucleus, leading to the formation of prereplicative sites and replication compartments. This process is driven by the protein which can form double-helical filaments in the absence of DNA. The polypeptide is Major DNA-binding protein (Homo sapiens (Human)).